The primary structure comprises 124 residues: Large ribosomal subunit protein uL22 (124 aa).

The protein belongs to the universal ribosomal protein uL22 family. Part of the 50S ribosomal subunit.

Its function is as follows. This protein binds specifically to 23S rRNA; its binding is stimulated by other ribosomal proteins, e.g. L4, L17, and L20. It is important during the early stages of 50S assembly. It makes multiple contacts with different domains of the 23S rRNA in the assembled 50S subunit and ribosome. The globular domain of the protein is located near the polypeptide exit tunnel on the outside of the subunit, while an extended beta-hairpin is found that lines the wall of the exit tunnel in the center of the 70S ribosome. The sequence is that of Large ribosomal subunit protein uL22 from Macrococcus caseolyticus (strain JCSC5402) (Macrococcoides caseolyticum).